A 281-amino-acid chain; its full sequence is Fructose-bisphosphate aldolase class 1 (281 aa).

The active-site Schiff-base intermediate with dihydroxyacetone-P is the K191.

It belongs to the DeoC/FbaB aldolase family. As to quaternary structure, homooctamer.

It localises to the cytoplasm. It catalyses the reaction beta-D-fructose 1,6-bisphosphate = D-glyceraldehyde 3-phosphate + dihydroxyacetone phosphate. Its activity is regulated as follows. Activated by citrate. This chain is Fructose-bisphosphate aldolase class 1 (fba), found in Pyrococcus abyssi (strain GE5 / Orsay).